The following is a 415-amino-acid chain: Serine hydroxymethyltransferase (415 aa).

(6S)-5,6,7,8-tetrahydrofolate is bound by residues L122 and 126-128; that span reads GHL. At K230 the chain carries N6-(pyridoxal phosphate)lysine.

Belongs to the SHMT family. As to quaternary structure, homodimer. Pyridoxal 5'-phosphate is required as a cofactor.

It is found in the cytoplasm. It carries out the reaction (6R)-5,10-methylene-5,6,7,8-tetrahydrofolate + glycine + H2O = (6S)-5,6,7,8-tetrahydrofolate + L-serine. It participates in one-carbon metabolism; tetrahydrofolate interconversion. It functions in the pathway amino-acid biosynthesis; glycine biosynthesis; glycine from L-serine: step 1/1. Catalyzes the reversible interconversion of serine and glycine with tetrahydrofolate (THF) serving as the one-carbon carrier. This reaction serves as the major source of one-carbon groups required for the biosynthesis of purines, thymidylate, methionine, and other important biomolecules. Also exhibits THF-independent aldolase activity toward beta-hydroxyamino acids, producing glycine and aldehydes, via a retro-aldol mechanism. In Ralstonia pickettii (strain 12J), this protein is Serine hydroxymethyltransferase.